Here is a 247-residue protein sequence, read N- to C-terminus: UPF0273 protein PF1931 (247 aa).

One can recognise a KaiC domain in the interval 3-247 (RRVKTGIPGM…VLKRGRIYEL (245 aa)). 30-37 (GGPGTGKS) lines the ATP pocket.

The protein belongs to the UPF0273 family.

The protein is UPF0273 protein PF1931 of Pyrococcus furiosus (strain ATCC 43587 / DSM 3638 / JCM 8422 / Vc1).